The following is a 596-amino-acid chain: MSQSHSILSSLILLVAIIFCVPHVIAVPWTTDGHAQLSPVTPRYPTQEPSGIRYRNVIPQLTWLCDTAIEKIFGLPPKVAKKPDVPGNVARPTNAQLPATLLAKYGGDVVLRFNLTTPAEEQALAEAADTLFLDIWEFTSNWADIRLREDDVPSLLGLLPKSLQNAYSHLMPDLAKSIYQSYPSMAYADAAFSSKHVERAFTPALRTSKVEGADNIFFQNYQPLSVIIPWMRLMSSMFSTHVRMINIGISYEGRDIPALRIGVSPNLPSEATKPRKTIILSGGFHAREWISVSSVTYAAWSLITSYGKSPAITKLLQEFDFVLVPTINVDGYVYTWENDRLWRKNRQQTNLRFCRGLDLDRGFGFEWGSSTQTNPCSESYPGDAPFQAVESHRFAEWAKNETENNNVHFVGFLDLHSYSQQVLYPYSYSCLADPPSLENLEELGIGLAKAIRISSGEQYTVASACEGAISSKIPGYSSTSRMEMGGGSAIDWFYHELGVRYSYQIKLRDTGSYGFLLPKENIVPTGEEVFNVIKYFGDFLLGDKGIEKAKSSEEEPITKPVKSELPLGVMEEESVISDEIEDEYEDINLELKRRRR.

A signal peptide spans 1-26; it reads MSQSHSILSSLILLVAIIFCVPHVIA. A propeptide spanning residues 27–190 is cleaved from the precursor; sequence VPWTTDGHAQ…SYPSMAYADA (164 aa). N-linked (GlcNAc...) asparagine glycosylation occurs at Asn-114. The Peptidase M14 domain occupies 220-540; that stretch reads NYQPLSVIIP…NVIKYFGDFL (321 aa). Residues His-285 and Glu-288 each contribute to the Zn(2+) site. Substrate is bound by residues 285 to 288, Arg-343, and 360 to 361; these read HARE and DR. Cysteines 354 and 376 form a disulfide. Residue Asn-400 is glycosylated (N-linked (GlcNAc...) asparagine). Residue His-416 participates in Zn(2+) binding. 417–418 contacts substrate; sequence SY.

It belongs to the peptidase M14 family. The cofactor is Zn(2+).

It is found in the vacuole. Its subcellular location is the secreted. Inactive carboxypeptidase that may play a role in cell wall organization and biogenesis. This is Inactive metallocarboxypeptidase ecm14 (ecm14) from Sclerotinia sclerotiorum (strain ATCC 18683 / 1980 / Ss-1) (White mold).